Reading from the N-terminus, the 85-residue chain is Coiled-coil-helix-coiled-coil-helix domain-containing protein 7 (85 aa).

The region spanning 13-55 is the CHCH domain; sequence INPCLSESDASTRCMDENNYDRERCSSYFLKYKNCRRFWNSVM. Short sequence motifs (cx9C motif) lie at residues 16-26 and 37-47; these read CLSESDASTRC and CSSYFLKYKNC. 2 disulfide bridges follow: Cys-16–Cys-47 and Cys-26–Cys-37.

It belongs to the CHCHD7 family. In terms of assembly, monomer.

It is found in the mitochondrion intermembrane space. This Mus musculus (Mouse) protein is Coiled-coil-helix-coiled-coil-helix domain-containing protein 7 (Chchd7).